A 248-amino-acid chain; its full sequence is Putative glutamine amidotransferase-like protein C13C5.04 (248 aa).

The 205-residue stretch at 13-217 folds into the Glutamine amidotransferase type-1 domain; the sequence is PMVEITSAYG…VKVLRGTEVF (205 aa).

The polypeptide is Putative glutamine amidotransferase-like protein C13C5.04 (Schizosaccharomyces pombe (strain 972 / ATCC 24843) (Fission yeast)).